Here is a 384-residue protein sequence, read N- to C-terminus: S-adenosylmethionine synthase (384 aa).

Histidine 15 provides a ligand contact to ATP. Aspartate 17 serves as a coordination point for Mg(2+). Glutamate 43 contributes to the K(+) binding site. Positions 56 and 99 each coordinate L-methionine. The flexible loop stretch occupies residues 99 to 109; that stretch reads QSPDINQGVDR. ATP-binding positions include 164–166, 230–231, aspartate 239, 245–246, alanine 262, and lysine 266; these read DAK, RF, and RK. Aspartate 239 serves as a coordination point for L-methionine. Lysine 270 serves as a coordination point for L-methionine.

This sequence belongs to the AdoMet synthase family. Homotetramer; dimer of dimers. The cofactor is Mg(2+). Requires K(+) as cofactor.

The protein resides in the cytoplasm. The catalysed reaction is L-methionine + ATP + H2O = S-adenosyl-L-methionine + phosphate + diphosphate. It functions in the pathway amino-acid biosynthesis; S-adenosyl-L-methionine biosynthesis; S-adenosyl-L-methionine from L-methionine: step 1/1. Its function is as follows. Catalyzes the formation of S-adenosylmethionine (AdoMet) from methionine and ATP. The overall synthetic reaction is composed of two sequential steps, AdoMet formation and the subsequent tripolyphosphate hydrolysis which occurs prior to release of AdoMet from the enzyme. This chain is S-adenosylmethionine synthase, found in Klebsiella pneumoniae (strain 342).